Consider the following 795-residue polypeptide: Lon protease (795 aa).

A Lon N-terminal domain is found at 11–203; sequence GRVIPVSDIV…KFIDYLLKQK (193 aa). 356 to 363 is a binding site for ATP; sequence GPPGVGKT. The region spanning 593–771 is the Lon proteolytic domain; the sequence is DNVPGVVTGL…EDVLRETLGI (179 aa). Active-site residues include S677 and K720.

Belongs to the peptidase S16 family. In terms of assembly, homohexamer. Organized in a ring with a central cavity.

Its subcellular location is the cytoplasm. The catalysed reaction is Hydrolysis of proteins in presence of ATP.. Functionally, ATP-dependent serine protease that mediates the selective degradation of mutant and abnormal proteins as well as certain short-lived regulatory proteins. Required for cellular homeostasis and for survival from DNA damage and developmental changes induced by stress. Degrades polypeptides processively to yield small peptide fragments that are 5 to 10 amino acids long. Binds to DNA in a double-stranded, site-specific manner. In Clostridium beijerinckii (strain ATCC 51743 / NCIMB 8052) (Clostridium acetobutylicum), this protein is Lon protease.